A 424-amino-acid polypeptide reads, in one-letter code: Glutamyl-tRNA reductase (424 aa).

Residues 53–56 (TCNR), Ser111, 116–118 (EPQ), and Gln122 each bind substrate. The Nucleophile role is filled by Cys54. 191–196 (GAGEMI) contributes to the NADP(+) binding site.

It belongs to the glutamyl-tRNA reductase family. In terms of assembly, homodimer.

It catalyses the reaction (S)-4-amino-5-oxopentanoate + tRNA(Glu) + NADP(+) = L-glutamyl-tRNA(Glu) + NADPH + H(+). It participates in porphyrin-containing compound metabolism; protoporphyrin-IX biosynthesis; 5-aminolevulinate from L-glutamyl-tRNA(Glu): step 1/2. Functionally, catalyzes the NADPH-dependent reduction of glutamyl-tRNA(Glu) to glutamate 1-semialdehyde (GSA). The polypeptide is Glutamyl-tRNA reductase (Bordetella avium (strain 197N)).